The primary structure comprises 299 residues: MDPEGLAHLLPPATLAALADSWLREDCPGLNYVALVSGTAPSQAVLWAKSPGVLAGRPFLDAIFAQVNCQVSWFLPEGSKLVPVAKVAEVRGPAHCLLLGERVALNTLARCSGVASMAAAAVETARGTGWAGHVAGTRKTTPGFRLVEKYGLLVGGAAAHRYDLGGLVMVKDNHVMAAGGVKKAVRAARRAADFALKVEVECSSLQEAVEAAEAGADLVLLDNFRPEELHPTAATLKAQFPSVSVEASGGVRLDNLPQFCGPHIDVISLGMLTQAAPALDFSLKLFAEGATPVPHARRS.

An important for hexamer formation region spans residues 8-12 (HLLPP). Quinolinate contacts are provided by residues arginine 102, 138–139 (RK), 160–161 (HR), lysine 171, glutamate 201, aspartate 222, 248–250 (SGG), and glycine 270. The residue at position 291 (threonine 291) is a Phosphothreonine.

The protein belongs to the NadC/ModD family. In terms of assembly, hexamer formed by 3 homodimers.

It catalyses the reaction nicotinate beta-D-ribonucleotide + CO2 + diphosphate = quinolinate + 5-phospho-alpha-D-ribose 1-diphosphate + 2 H(+). It functions in the pathway cofactor biosynthesis; NAD(+) biosynthesis; nicotinate D-ribonucleotide from quinolinate: step 1/1. Its function is as follows. Involved in the catabolism of quinolinic acid (QA). This Bos taurus (Bovine) protein is Nicotinate-nucleotide pyrophosphorylase [carboxylating] (QPRT).